Reading from the N-terminus, the 704-residue chain is Polyribonucleotide nucleotidyltransferase (704 aa).

D485 and D491 together coordinate Mg(2+). Residues 552-611 (PKTETIQIDPDKIRSVIGAGGKVINKIIQDTGVKIDIKEDGSVFVSSSDHAGVKEAIKII) form the KH domain. Positions 621-689 (GEIYLGKVTK…SQGRINLSRK (69 aa)) constitute an S1 motif domain.

It belongs to the polyribonucleotide nucleotidyltransferase family. Mg(2+) is required as a cofactor.

The protein localises to the cytoplasm. It catalyses the reaction RNA(n+1) + phosphate = RNA(n) + a ribonucleoside 5'-diphosphate. Its function is as follows. Involved in mRNA degradation. Catalyzes the phosphorolysis of single-stranded polyribonucleotides processively in the 3'- to 5'-direction. The sequence is that of Polyribonucleotide nucleotidyltransferase from Clostridium botulinum (strain Eklund 17B / Type B).